The chain runs to 356 residues: GDSL esterase/lipase At2g36325 (356 aa).

The first 26 residues, 1-26 (MNITKLTPWFLFSCLILLSDYIKVNS), serve as a signal peptide directing secretion. Asparagine 25 carries an N-linked (GlcNAc...) asparagine glycan. The active-site Nucleophile is serine 54. N-linked (GlcNAc...) asparagine glycosylation is found at asparagine 165, asparagine 185, and asparagine 240. Residues aspartate 334 and histidine 337 contribute to the active site.

It belongs to the 'GDSL' lipolytic enzyme family.

It localises to the secreted. This chain is GDSL esterase/lipase At2g36325, found in Arabidopsis thaliana (Mouse-ear cress).